A 427-amino-acid chain; its full sequence is MDCLPDDLLVQILYLLPTKEAVSTSVLSKRWRTLFTRSDNLDFHDPISGRPEDILKSFNDFVDSSLAFQGGKHIKKFSLHTKIKTFEYHVLDRWICNALEHGVSELHLHLMHESWPWLFSIPSKVFNSSTLVKLSLGSRLYCPSFPPDTSLPALKVLLLDSILFRDDQLSNVFLAACPALEDLTIHHTYHPCVISSKSIKKLSLSVNSGYYGAGYILTLDTPSVVDLYYSDSPRHNAPLFHLDSLAKVTLDLHFIENNNREVQNDADVKNLIREICNVKTLHLTCSTVEVISVYCKGGLPMFNNLVELVFSSKKEGWRVLLPLLLENSPNLETLVLSDLHRYTFGRRHRFVGIPIPPNNQIKVLRIMQYQGSATVLKHISHFLLNMDCLEVMKVNVAAALDDPKKMQLTEDLLKLPTASCKLKIQVL.

In terms of domain architecture, F-box spans 1–46 (MDCLPDDLLVQILYLLPTKEAVSTSVLSKRWRTLFTRSDNLDFHDP).

The sequence is that of Putative F-box protein At3g44060 from Arabidopsis thaliana (Mouse-ear cress).